The sequence spans 379 residues: Homoserine O-succinyltransferase (379 aa).

In terms of domain architecture, AB hydrolase-1 spans Asn-51–Leu-360. The active-site Nucleophile is Ser-157. Residue Arg-227 coordinates substrate. Residues Asp-323 and His-356 contribute to the active site. Asp-357 is a substrate binding site.

It belongs to the AB hydrolase superfamily. MetX family. In terms of assembly, homodimer.

It is found in the cytoplasm. It carries out the reaction L-homoserine + succinyl-CoA = O-succinyl-L-homoserine + CoA. It functions in the pathway amino-acid biosynthesis; L-methionine biosynthesis via de novo pathway; O-succinyl-L-homoserine from L-homoserine: step 1/1. Functionally, transfers a succinyl group from succinyl-CoA to L-homoserine, forming succinyl-L-homoserine. This Pseudomonas fluorescens (strain ATCC BAA-477 / NRRL B-23932 / Pf-5) protein is Homoserine O-succinyltransferase.